Reading from the N-terminus, the 802-residue chain is Oligophrenin-1 (802 aa).

In terms of domain architecture, PH spans Gln265 to Pro368. Positions Met380–Tyr564 constitute a Rho-GAP domain. Disordered regions lie at residues Gln641–Glu663 and Thr682–Ser802. Residues His716–Gly732 are compositionally biased toward basic and acidic residues. A compositionally biased stretch (polar residues) spans Ser751 to Ala768.

Interacts with HOMER1. Interacts with AMPA receptor complexes. Interacts with SH3GL2 (endophilin-A1). Interacts (via C-terminus) with NR1D1. In terms of tissue distribution, high expression in brain, particularly in the cerebellum, hippocampus, thalamus, frontal lobes, sensory cortex. Found in the myelin sheaths of peripheral nerves, chromaffin cells within the adrenal medulla, and in extra-adrenal chromaffin cells associated with celiac ganglia.

It localises to the postsynapse. Its subcellular location is the presynapse. The protein resides in the cell projection. The protein localises to the axon. It is found in the dendritic spine. It localises to the dendrite. Its subcellular location is the cytoplasm. Its function is as follows. Stimulates GTP hydrolysis of members of the Rho family. Its action on RHOA activity and signaling is implicated in growth and stabilization of dendritic spines, and therefore in synaptic function, in hippocampal neurons. Critical for the stabilization of AMPA receptors at postsynaptic sites. Critical for the regulation of synaptic vesicle endocytosis at pre-synaptic terminals. Required for the localization of NR1D1 to dendrites, can suppress its repressor activity and protect it from proteasomal degradation. This Rattus norvegicus (Rat) protein is Oligophrenin-1 (Ophn1).